Reading from the N-terminus, the 131-residue chain is Putative superoxide reductase (131 aa).

Fe cation contacts are provided by Glu15, His17, His45, His51, Cys115, and His118.

This sequence belongs to the desulfoferrodoxin family. The cofactor is Fe cation.

It catalyses the reaction reduced [rubredoxin] + superoxide + 2 H(+) = oxidized [rubredoxin] + H2O2. In terms of biological role, uses electrons from reduced NADP, by way of rubredoxin and an oxidoreductase, to catalyze the reduction of superoxide to hydrogen peroxide. The polypeptide is Putative superoxide reductase (Thermotoga maritima (strain ATCC 43589 / DSM 3109 / JCM 10099 / NBRC 100826 / MSB8)).